We begin with the raw amino-acid sequence, 82 residues long: Protein C14 (82 aa).

This Homo sapiens (Human) protein is Protein C14.